The chain runs to 355 residues: Protein-glutamate methylesterase/protein-glutamine glutaminase (355 aa).

One can recognise a Response regulatory domain in the interval 4–121; that stretch reads KVLIIDDSAL…ANGMHEYSEM (118 aa). Position 55 is a 4-aspartylphosphate (D55). The region spanning 156–348 is the CheB-type methylesterase domain; that stretch reads LISSEKLIII…GRVLQYLAAN (193 aa). Residues S168, H194, and D290 contribute to the active site.

This sequence belongs to the CheB family. Phosphorylated by CheA. Phosphorylation of the N-terminal regulatory domain activates the methylesterase activity.

The protein resides in the cytoplasm. The catalysed reaction is [protein]-L-glutamate 5-O-methyl ester + H2O = L-glutamyl-[protein] + methanol + H(+). The enzyme catalyses L-glutaminyl-[protein] + H2O = L-glutamyl-[protein] + NH4(+). Functionally, involved in chemotaxis. Part of a chemotaxis signal transduction system that modulates chemotaxis in response to various stimuli. Catalyzes the demethylation of specific methylglutamate residues introduced into the chemoreceptors (methyl-accepting chemotaxis proteins or MCP) by CheR. Also mediates the irreversible deamidation of specific glutamine residues to glutamic acid. This chain is Protein-glutamate methylesterase/protein-glutamine glutaminase, found in Methylobacillus flagellatus (strain ATCC 51484 / DSM 6875 / VKM B-1610 / KT).